Consider the following 368-residue polypeptide: Histidinol-phosphate aminotransferase 1 (368 aa).

Lysine 224 is modified (N6-(pyridoxal phosphate)lysine).

It belongs to the class-II pyridoxal-phosphate-dependent aminotransferase family. Histidinol-phosphate aminotransferase subfamily. As to quaternary structure, homodimer. The cofactor is pyridoxal 5'-phosphate.

The enzyme catalyses L-histidinol phosphate + 2-oxoglutarate = 3-(imidazol-4-yl)-2-oxopropyl phosphate + L-glutamate. It functions in the pathway amino-acid biosynthesis; L-histidine biosynthesis; L-histidine from 5-phospho-alpha-D-ribose 1-diphosphate: step 7/9. This chain is Histidinol-phosphate aminotransferase 1 (hisC1), found in Rhizobium meliloti (strain 1021) (Ensifer meliloti).